An 81-amino-acid chain; its full sequence is IPPSRSSDCRCVPITLIVGFCIHPTGLSSVAKMIDEHPNLCQSDDECMKKGSGNFCARYPNNYIDYGWCFGSDSEALKGFL.

Positions 27–34 (LSSVAKMI) are excised as a propeptide.

In terms of processing, three disulfide bonds are probably present. The C-terminal glycine may be removed from A1b.

Its function is as follows. A1b binds to basic 7S globulin (BG) and stimulates its phosphorylation activity. This is Albumin-1 (LEG1) from Lupinus angustifolius (Narrow-leaved blue lupine).